We begin with the raw amino-acid sequence, 96 residues long: MTNPHDVIIRPVVTEHSMAEMGEKKYTFVVAKDANKTEIKKAVEKVFGVSVDKVNTLNYDGKVKRMGRTQGRTSSFKKAVVKLTADSKEIEFFQGM.

Belongs to the universal ribosomal protein uL23 family. In terms of assembly, part of the 50S ribosomal subunit. Contacts protein L29, and trigger factor when it is bound to the ribosome.

In terms of biological role, one of the early assembly proteins it binds 23S rRNA. One of the proteins that surrounds the polypeptide exit tunnel on the outside of the ribosome. Forms the main docking site for trigger factor binding to the ribosome. The chain is Large ribosomal subunit protein uL23 from Clostridioides difficile (strain 630) (Peptoclostridium difficile).